A 111-amino-acid polypeptide reads, in one-letter code: MGQFTVVSLGLLAMFLSLSGAKGDNCPASWISRNGVCNKLFPDRKTWLEAEKRTWKWSDRTSTNYFSWNQGEPNNVQDNENCVHLWAPSGYLKWNDEPCASLHPFICQYKL.

Residues 1–23 (MGQFTVVSLGLLAMFLSLSGAKG) form the signal peptide. Residues Cys26 and Cys37 are joined by a disulfide bond. Residues 33-108 (RNGVCNKLFP…CASLHPFICQ (76 aa)) enclose the C-type lectin domain. The Mannose-binding motif lies at 72–74 (EPN). Residues Glu80, Asn95, and Asp96 each coordinate Ca(2+). Cysteines 82 and 99 form a disulfide.

It belongs to the true venom lectin family. In terms of tissue distribution, expressed by the venom gland.

The protein localises to the secreted. Its function is as follows. Mannose-binding lectin which recognizes specific carbohydrate structures and agglutinates a variety of animal cells by binding to cell-surface glycoproteins and glycolipids. May be a calcium-dependent lectin. The polypeptide is C-type lectin lectoxin-Enh2 (Pseudoferania polylepis (Macleay's water snake)).